The following is a 341-amino-acid chain: Holliday junction branch migration complex subunit RuvB (341 aa).

The tract at residues 1-180 (MAKSHTLNPE…FGIQLRLDYY (180 aa)) is large ATPase domain (RuvB-L). ATP contacts are provided by L19, R20, G61, K64, T65, T66, R170, Y180, and R217. Mg(2+) is bound at residue T65. The small ATPAse domain (RuvB-S) stretch occupies residues 181 to 251 (NDEEMKEIVL…LCLKAFEKMG (71 aa)). The head domain (RuvB-H) stretch occupies residues 254–341 (DLGLDGMDRQ…ENHGQDPTLF (88 aa)). 2 residues coordinate DNA: R309 and R314.

This sequence belongs to the RuvB family. Homohexamer. Forms an RuvA(8)-RuvB(12)-Holliday junction (HJ) complex. HJ DNA is sandwiched between 2 RuvA tetramers; dsDNA enters through RuvA and exits via RuvB. An RuvB hexamer assembles on each DNA strand where it exits the tetramer. Each RuvB hexamer is contacted by two RuvA subunits (via domain III) on 2 adjacent RuvB subunits; this complex drives branch migration. In the full resolvosome a probable DNA-RuvA(4)-RuvB(12)-RuvC(2) complex forms which resolves the HJ.

It is found in the cytoplasm. The enzyme catalyses ATP + H2O = ADP + phosphate + H(+). The RuvA-RuvB-RuvC complex processes Holliday junction (HJ) DNA during genetic recombination and DNA repair, while the RuvA-RuvB complex plays an important role in the rescue of blocked DNA replication forks via replication fork reversal (RFR). RuvA specifically binds to HJ cruciform DNA, conferring on it an open structure. The RuvB hexamer acts as an ATP-dependent pump, pulling dsDNA into and through the RuvAB complex. RuvB forms 2 homohexamers on either side of HJ DNA bound by 1 or 2 RuvA tetramers; 4 subunits per hexamer contact DNA at a time. Coordinated motions by a converter formed by DNA-disengaged RuvB subunits stimulates ATP hydrolysis and nucleotide exchange. Immobilization of the converter enables RuvB to convert the ATP-contained energy into a lever motion, pulling 2 nucleotides of DNA out of the RuvA tetramer per ATP hydrolyzed, thus driving DNA branch migration. The RuvB motors rotate together with the DNA substrate, which together with the progressing nucleotide cycle form the mechanistic basis for DNA recombination by continuous HJ branch migration. Branch migration allows RuvC to scan DNA until it finds its consensus sequence, where it cleaves and resolves cruciform DNA. The sequence is that of Holliday junction branch migration complex subunit RuvB from Leptospira borgpetersenii serovar Hardjo-bovis (strain JB197).